Here is a 261-residue protein sequence, read N- to C-terminus: Segregation and condensation protein A (261 aa).

Belongs to the ScpA family. In terms of assembly, component of a cohesin-like complex composed of ScpA, ScpB and the Smc homodimer, in which ScpA and ScpB bind to the head domain of Smc. The presence of the three proteins is required for the association of the complex with DNA.

The protein localises to the cytoplasm. Its function is as follows. Participates in chromosomal partition during cell division. May act via the formation of a condensin-like complex containing Smc and ScpB that pull DNA away from mid-cell into both cell halves. In Desulfitobacterium hafniense (strain DSM 10664 / DCB-2), this protein is Segregation and condensation protein A.